We begin with the raw amino-acid sequence, 366 residues long: NADH-quinone oxidoreductase subunit H (366 aa).

Helical transmembrane passes span 27 to 47 (LLLI…LTFA), 99 to 119 (FLFL…WAVV), 134 to 154 (LLYI…AGWA), 168 to 188 (AAQV…VLMM), 206 to 226 (FLNW…ISGV), 268 to 288 (ILVA…PVDI), 294 to 314 (IPGM…FLWF), and 329 to 349 (LGWK…GMVM).

This sequence belongs to the complex I subunit 1 family. As to quaternary structure, NDH-1 is composed of 14 different subunits. Subunits NuoA, H, J, K, L, M, N constitute the membrane sector of the complex.

The protein localises to the cell inner membrane. It carries out the reaction a quinone + NADH + 5 H(+)(in) = a quinol + NAD(+) + 4 H(+)(out). Its function is as follows. NDH-1 shuttles electrons from NADH, via FMN and iron-sulfur (Fe-S) centers, to quinones in the respiratory chain. The immediate electron acceptor for the enzyme in this species is believed to be ubiquinone. Couples the redox reaction to proton translocation (for every two electrons transferred, four hydrogen ions are translocated across the cytoplasmic membrane), and thus conserves the redox energy in a proton gradient. This subunit may bind ubiquinone. The polypeptide is NADH-quinone oxidoreductase subunit H (Nitrosomonas europaea (strain ATCC 19718 / CIP 103999 / KCTC 2705 / NBRC 14298)).